A 46-amino-acid polypeptide reads, in one-letter code: Viscotoxin-A2 (46 aa).

Intrachain disulfides connect Cys-3-Cys-40, Cys-4-Cys-32, and Cys-16-Cys-26.

This sequence belongs to the plant thionin (TC 1.C.44) family.

Its subcellular location is the secreted. Its function is as follows. Thionins are small plant proteins which are toxic to animal cells. They seem to exert their toxic effect at the level of the cell membrane. Their precise function is not known. The polypeptide is Viscotoxin-A2 (THI2.3) (Viscum album (European mistletoe)).